We begin with the raw amino-acid sequence, 501 residues long: Cytochrome P450 7A1 (501 aa).

Residues 4 to 24 traverse the membrane as a helical segment; that stretch reads ISLLGGIVTAVCCCLWLLLGM. Cys441 is a heme binding site.

Belongs to the cytochrome P450 family. Requires heme as cofactor.

It localises to the endoplasmic reticulum membrane. Its subcellular location is the microsome membrane. It carries out the reaction cholesterol + reduced [NADPH--hemoprotein reductase] + O2 = 7alpha-hydroxycholesterol + oxidized [NADPH--hemoprotein reductase] + H2O + H(+). It catalyses the reaction 4beta-hydroxycholesterol + reduced [NADPH--hemoprotein reductase] + O2 = 4beta,7alpha-dihydroxycholesterol + oxidized [NADPH--hemoprotein reductase] + H2O + H(+). The catalysed reaction is lathosterol + reduced [NADPH--hemoprotein reductase] + O2 = 7alpha,8alpha-epoxy-5alpha-cholestan-3beta-ol + oxidized [NADPH--hemoprotein reductase] + H2O + H(+). The enzyme catalyses lathosterol + reduced [NADPH--hemoprotein reductase] + O2 = 5alpha-cholestan-7-oxo-3beta-ol + oxidized [NADPH--hemoprotein reductase] + H2O + H(+). It carries out the reaction 7-dehydrocholesterol + reduced [NADPH--hemoprotein reductase] + O2 = 7-oxocholesterol + oxidized [NADPH--hemoprotein reductase] + H2O + H(+). It catalyses the reaction (24S)-hydroxycholesterol + reduced [NADPH--hemoprotein reductase] + O2 = (24S)-7alpha-dihydroxycholesterol + oxidized [NADPH--hemoprotein reductase] + H2O + H(+). The catalysed reaction is (24R)-hydroxycholesterol + reduced [NADPH--hemoprotein reductase] + O2 = (24R)-7alpha-dihydroxycholesterol + oxidized [NADPH--hemoprotein reductase] + H2O + H(+). It participates in lipid metabolism; bile acid biosynthesis. Its pathway is steroid metabolism; cholesterol degradation. Its function is as follows. A cytochrome P450 monooxygenase involved in the metabolism of endogenous cholesterol and its oxygenated derivatives (oxysterols). Mechanistically, uses molecular oxygen inserting one oxygen atom into a substrate, and reducing the second into a water molecule, with two electrons provided by NADPH via cytochrome P450 reductase (CPR; NADPH-ferrihemoprotein reductase). Functions as a critical regulatory enzyme of bile acid biosynthesis and cholesterol homeostasis. Catalyzes the hydroxylation of carbon hydrogen bond at 7-alpha position of cholesterol, a rate-limiting step in cholesterol catabolism and bile acid biosynthesis. 7-alpha hydroxylates several oxysterols, including 4beta-hydroxycholesterol and 24-hydroxycholesterol. Catalyzes the oxidation of the 7,8 double bond of 7-dehydrocholesterol and lathosterol with direct and predominant formation of the 7-keto derivatives. This is Cytochrome P450 7A1 (CYP7A1) from Sus scrofa (Pig).